Consider the following 137-residue polypeptide: Small ribosomal subunit protein uS12 (137 aa).

Disordered stretches follow at residues 1–21 and 33–57; these read MPTI…KSKS and KVQT…TPRK. D102 carries the 3-methylthioaspartic acid modification.

The protein belongs to the universal ribosomal protein uS12 family. As to quaternary structure, part of the 30S ribosomal subunit. Contacts proteins S8 and S17. May interact with IF1 in the 30S initiation complex.

In terms of biological role, with S4 and S5 plays an important role in translational accuracy. Interacts with and stabilizes bases of the 16S rRNA that are involved in tRNA selection in the A site and with the mRNA backbone. Located at the interface of the 30S and 50S subunits, it traverses the body of the 30S subunit contacting proteins on the other side and probably holding the rRNA structure together. The combined cluster of proteins S8, S12 and S17 appears to hold together the shoulder and platform of the 30S subunit. The protein is Small ribosomal subunit protein uS12 of Streptococcus pneumoniae (strain ATCC 700669 / Spain 23F-1).